A 429-amino-acid polypeptide reads, in one-letter code: Ribosomal RNA small subunit methyltransferase B (429 aa).

S-adenosyl-L-methionine is bound by residues 254–260 (CAAPGGK), D277, D303, and D322. The Nucleophile role is filled by C375.

Belongs to the class I-like SAM-binding methyltransferase superfamily. RsmB/NOP family.

The protein resides in the cytoplasm. It catalyses the reaction cytidine(967) in 16S rRNA + S-adenosyl-L-methionine = 5-methylcytidine(967) in 16S rRNA + S-adenosyl-L-homocysteine + H(+). Specifically methylates the cytosine at position 967 (m5C967) of 16S rRNA. The chain is Ribosomal RNA small subunit methyltransferase B from Shigella flexneri.